The chain runs to 547 residues: MASKEIIFDQKARDAILKGVNTLADAVKVTLGPKGRNVVIEKSFGSPTITKDGVTVAKEIELENKFENMGAQMVKEVASKTSDVAGDGTTTATVLAQALYREGSKLVAAGHNPMEIKRGIDKAVEIIVGELKKLSKPTKDQKEIAQVGIISANGDETIGNIIAEAMEKVGKEGVITVEEAKGLETTLEVVEGMQFDRGYLSPYFVTDAERMVANLEDAYILIHEKKISNMKDLLPLLEQIARSGKPLLIVAEEVEGEALATLVVNKLRGTLHVAAVKAPGFGDRRKAMLEDIAILTGGRMIAEELGLKLEQVSLKDLGRAKRISIDKDNTTIVDGAGQKADIEARVKTIRAQIEETTSDYDREKLQERLAKLVGGVAVINVGAATETEMKEKKARVEDALHATRAAVEEGIVPGGGVAYLRAVKALEGVKVSEGEKFGLDIVRRALEEPLRQIAGNGGYEASIVVNKVKESKDTNFGFNAATGDYEDLVKSGVIDPTKVSRSALQNASSVASLMLTTMALVAEKPKEESAAPAGGGMGGMGGMGGMM.

ATP-binding positions include T30–P33, K51, D87–T91, G415, N479–A481, and D495. The segment at K526–M547 is disordered. A compositionally biased stretch (gly residues) spans A533–M547.

This sequence belongs to the chaperonin (HSP60) family. Forms a cylinder of 14 subunits composed of two heptameric rings stacked back-to-back. Interacts with the co-chaperonin GroES.

The protein resides in the cytoplasm. The catalysed reaction is ATP + H2O + a folded polypeptide = ADP + phosphate + an unfolded polypeptide.. Functionally, together with its co-chaperonin GroES, plays an essential role in assisting protein folding. The GroEL-GroES system forms a nano-cage that allows encapsulation of the non-native substrate proteins and provides a physical environment optimized to promote and accelerate protein folding. This is Chaperonin GroEL 2 from Anaeromyxobacter sp. (strain Fw109-5).